The primary structure comprises 513 residues: 2-isopropylmalate synthase (513 aa).

Positions 5–268 constitute a Pyruvate carboxyltransferase domain; it reads LIIFDTTLRD…DIGVDTTQIV (264 aa). Positions 14, 202, 204, and 239 each coordinate Mn(2+). The regulatory domain stretch occupies residues 394 to 513; the sequence is RFISLSQRSE…KAVQKINPQI (120 aa).

The protein belongs to the alpha-IPM synthase/homocitrate synthase family. LeuA type 1 subfamily. In terms of assembly, homodimer. Mn(2+) is required as a cofactor.

It localises to the cytoplasm. The enzyme catalyses 3-methyl-2-oxobutanoate + acetyl-CoA + H2O = (2S)-2-isopropylmalate + CoA + H(+). It participates in amino-acid biosynthesis; L-leucine biosynthesis; L-leucine from 3-methyl-2-oxobutanoate: step 1/4. In terms of biological role, catalyzes the condensation of the acetyl group of acetyl-CoA with 3-methyl-2-oxobutanoate (2-ketoisovalerate) to form 3-carboxy-3-hydroxy-4-methylpentanoate (2-isopropylmalate). This chain is 2-isopropylmalate synthase, found in Cupriavidus necator (strain ATCC 17699 / DSM 428 / KCTC 22496 / NCIMB 10442 / H16 / Stanier 337) (Ralstonia eutropha).